A 168-amino-acid chain; its full sequence is Thiol peroxidase (168 aa).

Positions 19–168 (PQAGSKAQAF…YDAALNVLKA (150 aa)) constitute a Thioredoxin domain. Residue cysteine 61 is the Cysteine sulfenic acid (-SOH) intermediate of the active site. Cysteine 61 and cysteine 95 form a disulfide bridge.

This sequence belongs to the peroxiredoxin family. Tpx subfamily. In terms of assembly, homodimer.

The enzyme catalyses a hydroperoxide + [thioredoxin]-dithiol = an alcohol + [thioredoxin]-disulfide + H2O. In terms of biological role, thiol-specific peroxidase that catalyzes the reduction of hydrogen peroxide and organic hydroperoxides to water and alcohols, respectively. Plays a role in cell protection against oxidative stress by detoxifying peroxides. This chain is Thiol peroxidase, found in Salmonella typhimurium (strain LT2 / SGSC1412 / ATCC 700720).